A 272-amino-acid chain; its full sequence is Undecaprenyl-diphosphatase (272 aa).

8 helical membrane passes run S6–S26, A45–W65, L89–H109, L115–A135, A156–A176, Y189–L209, A221–I241, and I251–F271.

It belongs to the UppP family.

It is found in the cell inner membrane. It carries out the reaction di-trans,octa-cis-undecaprenyl diphosphate + H2O = di-trans,octa-cis-undecaprenyl phosphate + phosphate + H(+). Catalyzes the dephosphorylation of undecaprenyl diphosphate (UPP). Confers resistance to bacitracin. The polypeptide is Undecaprenyl-diphosphatase (Cronobacter sakazakii (strain ATCC BAA-894) (Enterobacter sakazakii)).